The following is a 197-amino-acid chain: MRTATIKRKTKETDIEVTVDLDGTGVANAATGIGFFDHMLDLLAKHSRIDITVKAVGDLHVDFHHTTEDVGIALGQAVKQALGNMAGITRYATVLMPMDETLTRVVIDVSGRPFLVFKADFPRDKIGEFDTELVREWFQAFAMNAGVTLHVETLYGENSHHIAESCFKGLARALRAAVAIDPKTAGEVPSTKGQLGG.

Belongs to the imidazoleglycerol-phosphate dehydratase family.

It localises to the cytoplasm. It carries out the reaction D-erythro-1-(imidazol-4-yl)glycerol 3-phosphate = 3-(imidazol-4-yl)-2-oxopropyl phosphate + H2O. Its pathway is amino-acid biosynthesis; L-histidine biosynthesis; L-histidine from 5-phospho-alpha-D-ribose 1-diphosphate: step 6/9. This Rhodopseudomonas palustris (strain ATCC BAA-98 / CGA009) protein is Imidazoleglycerol-phosphate dehydratase.